The following is a 283-amino-acid chain: Succinate dehydrogenase [ubiquinone] iron-sulfur subunit, mitochondrial (283 aa).

The 2Fe-2S ferredoxin-type domain maps to 66-145; it reads KKPTLQTYSI…PVKIYPLPHM (80 aa). Residues cysteine 105, cysteine 110, cysteine 113, and cysteine 125 each contribute to the [2Fe-2S] cluster site. Positions 186–216 constitute a 4Fe-4S ferredoxin-type domain; that stretch reads DRKKLDGMYECILCACCSTSCPSYWWNQDEY. Positions 196, 199, and 202 each coordinate [4Fe-4S] cluster. Residue cysteine 206 coordinates [3Fe-4S] cluster. Tryptophan 211 is a binding site for a ubiquinone. Cysteine 253 and cysteine 259 together coordinate [3Fe-4S] cluster. Cysteine 263 is a binding site for [4Fe-4S] cluster.

This sequence belongs to the succinate dehydrogenase/fumarate reductase iron-sulfur protein family. Component of complex II composed of four subunits: a flavoprotein (FP), an iron-sulfur protein (IP), and a cytochrome b composed of a large and a small subunit. [2Fe-2S] cluster serves as cofactor. [3Fe-4S] cluster is required as a cofactor. The cofactor is [4Fe-4S] cluster.

The protein localises to the mitochondrion inner membrane. The catalysed reaction is a quinone + succinate = fumarate + a quinol. It functions in the pathway carbohydrate metabolism; tricarboxylic acid cycle; fumarate from succinate (eukaryal route): step 1/1. Its function is as follows. Iron-sulfur protein (IP) subunit of succinate dehydrogenase (SDH) that is involved in complex II of the mitochondrial electron transport chain and is responsible for transferring electrons from succinate to ubiquinone (coenzyme Q). The sequence is that of Succinate dehydrogenase [ubiquinone] iron-sulfur subunit, mitochondrial (SDH2) from Uromyces fabae (Rust fungus).